Reading from the N-terminus, the 1120-residue chain is Vacuolar cation-chloride cotransporter 1 (1120 aa).

The interval 1 to 21 (MVSRFYQIPGTHRPSSAISSS) is disordered. Residues 1–62 (MVSRFYQIPG…YDPDNPNKDK (62 aa)) are Cytoplasmic-facing. Ser34 carries the post-translational modification Phosphoserine. Residues 63 to 83 (LGTYDGVFVPTALNVLSILMF) form a helical membrane-spanning segment. Residues 84–85 (LR) lie on the Vacuolar side of the membrane. A helical membrane pass occupies residues 86–106 (FGFILGQLGIICTIGLLLLSY). Over 107 to 145 (TINLLTTLSISAISTNGTVRGGGAYYMISRSLGPEFGGS) the chain is Cytoplasmic. Residues 146–166 (IGLVFFLGQVFNAGMNAVGII) traverse the membrane as a helical segment. Residues 167 to 193 (EPLLYNLGYSAQGEPPAALGELLPRGH) are Vacuolar-facing. The helical transmembrane segment at 194–214 (WHEFTYATVILFLCFSVAFVG) threads the bilayer. Residues 215 to 221 (SQTVSRA) are Cytoplasmic-facing. A helical membrane pass occupies residues 222–242 (GNILFLVLAASIFSIPLSALI). Over 243-283 (RSPFTEGGISYTGPSWQTFHDNLLPHLTKGAAGSLLKGKET) the chain is Vacuolar. The chain crosses the membrane as a helical span at residues 284–304 (FNDLFGVFFPATAGIFAGAGM). At 305 to 317 (SSELRKPSKSIPK) the chain is on the cytoplasmic side. A helical membrane pass occupies residues 318 to 338 (GTLWGLLFTFICYAVVVFSMG). Residues 339-360 (CSIPRRSLYDEVQIIQTISSVQ) are Vacuolar-facing. A helical transmembrane segment spans residues 361 to 381 (WVIFMGEMATSLFSIIVGMLG). Over 382–393 (AAYVLEAIAKDN) the chain is Cytoplasmic. The helical transmembrane segment at 394–414 (IIPGLEIFAHSPLYSLIFTWI) threads the bilayer. Residues 415–430 (LTQLCLFSDVNKIATF) lie on the Vacuolar side of the membrane. The chain crosses the membrane as a helical span at residues 431 to 451 (ITMTFLMTFVVMNLACFLLGI). The Cytoplasmic portion of the chain corresponds to 452-462 (SSAPNFRPSFK). The helical transmembrane segment at 463–482 (YFNRYTTAIGALLSVVAMLI) threads the bilayer. Residues 483–487 (VDGIS) lie on the Vacuolar side of the membrane. Residues 488–506 (ASVLFLAMILLFLFIHYFS) traverse the membrane as a helical segment. The Cytoplasmic portion of the chain corresponds to 507–1120 (PPKSWGDVSQ…SQTMTVTTAL (614 aa)). Residues Ser654, Ser915, and Ser918 each carry the phosphoserine modification.

Belongs to the SLC12A transporter family.

It localises to the vacuole membrane. In terms of biological role, catalyzes the coordinated symport of chloride with potassium ions across the vacuolar membrane. Involved in vacuolar osmoregulation. This Saccharomyces cerevisiae (strain ATCC 204508 / S288c) (Baker's yeast) protein is Vacuolar cation-chloride cotransporter 1.